A 62-amino-acid chain; its full sequence is Large ribosomal subunit protein uL29 (62 aa).

The protein belongs to the universal ribosomal protein uL29 family.

The chain is Large ribosomal subunit protein uL29 from Geotalea daltonii (strain DSM 22248 / JCM 15807 / FRC-32) (Geobacter daltonii).